The primary structure comprises 319 residues: Epoxyqueuosine reductase (319 aa).

Residue Asp-128 is the Proton donor of the active site. Residues 173–202 (EANDPHPNYCGTCTRCLSACPTAALVEPAV) form the 4Fe-4S ferredoxin-type domain. [4Fe-4S] cluster contacts are provided by Cys-182, Cys-185, Cys-188, Cys-192, Cys-208, Cys-236, Cys-239, and Cys-243.

This sequence belongs to the QueG family. In terms of assembly, monomer. Cob(II)alamin is required as a cofactor. [4Fe-4S] cluster serves as cofactor.

It is found in the cytoplasm. It carries out the reaction epoxyqueuosine(34) in tRNA + AH2 = queuosine(34) in tRNA + A + H2O. It participates in tRNA modification; tRNA-queuosine biosynthesis. Its function is as follows. Catalyzes the conversion of epoxyqueuosine (oQ) to queuosine (Q), which is a hypermodified base found in the wobble positions of tRNA(Asp), tRNA(Asn), tRNA(His) and tRNA(Tyr). This chain is Epoxyqueuosine reductase, found in Gloeobacter violaceus (strain ATCC 29082 / PCC 7421).